The chain runs to 118 residues: Large ribosomal subunit protein bL19 (118 aa).

It belongs to the bacterial ribosomal protein bL19 family.

Its function is as follows. This protein is located at the 30S-50S ribosomal subunit interface and may play a role in the structure and function of the aminoacyl-tRNA binding site. This is Large ribosomal subunit protein bL19 from Frankia casuarinae (strain DSM 45818 / CECT 9043 / HFP020203 / CcI3).